The sequence spans 594 residues: Jacalin-related lectin 44 (594 aa).

The tract at residues 1–23 (MIQKLGAKGIKSDERNQREWDDG) is disordered. 4 Jacalin-type lectin domains span residues 2 to 148 (IQKL…YFIS), 151 to 293 (PTRL…YFST), 296 to 441 (PNKL…YYRP), and 448 to 588 (VKRL…HVIP). Residues 10 to 23 (IKSDERNQREWDDG) are compositionally biased toward basic and acidic residues.

This sequence belongs to the jacalin lectin family.

In Arabidopsis thaliana (Mouse-ear cress), this protein is Jacalin-related lectin 44 (JAL44).